Consider the following 342-residue polypeptide: Biotin synthase (342 aa).

In terms of domain architecture, Radical SAM core spans 63 to 288 (PEVEVEGIIS…RTMLRFAGGR (226 aa)). The [4Fe-4S] cluster site is built by Cys-78, Cys-82, and Cys-85. Residues Cys-121, Cys-154, Cys-213, and Arg-283 each contribute to the [2Fe-2S] cluster site.

This sequence belongs to the radical SAM superfamily. Biotin synthase family. As to quaternary structure, homodimer. The cofactor is [4Fe-4S] cluster. [2Fe-2S] cluster is required as a cofactor.

The enzyme catalyses (4R,5S)-dethiobiotin + (sulfur carrier)-SH + 2 reduced [2Fe-2S]-[ferredoxin] + 2 S-adenosyl-L-methionine = (sulfur carrier)-H + biotin + 2 5'-deoxyadenosine + 2 L-methionine + 2 oxidized [2Fe-2S]-[ferredoxin]. Its pathway is cofactor biosynthesis; biotin biosynthesis; biotin from 7,8-diaminononanoate: step 2/2. Functionally, catalyzes the conversion of dethiobiotin (DTB) to biotin by the insertion of a sulfur atom into dethiobiotin via a radical-based mechanism. This is Biotin synthase from Mycobacteroides abscessus (strain ATCC 19977 / DSM 44196 / CCUG 20993 / CIP 104536 / JCM 13569 / NCTC 13031 / TMC 1543 / L948) (Mycobacterium abscessus).